Reading from the N-terminus, the 278-residue chain is NAD-capped RNA hydrolase NudC (278 aa).

Position 84 (Arg-84) interacts with substrate. Zn(2+) is bound by residues Cys-114 and Cys-117. Glu-127 is a substrate binding site. Cys-132 serves as a coordination point for Zn(2+). Tyr-140 contributes to the substrate binding site. Residues 141 to 264 (PRISPSMIVL…SIARYLIEAY (124 aa)) form the Nudix hydrolase domain. A divalent metal cation contacts are provided by Ala-174, Glu-190, and Glu-194. A Nudix box motif is present at residues 175–196 (GFVEPGESAEDCVHREVMEEVQ). A substrate-binding site is contributed by 208–215 (QCWPFPHS). Position 235 (Glu-235) interacts with a divalent metal cation. Ala-257 lines the substrate pocket.

Belongs to the Nudix hydrolase family. NudC subfamily. In terms of assembly, homodimer. Mg(2+) serves as cofactor. It depends on Mn(2+) as a cofactor. Requires Zn(2+) as cofactor.

It carries out the reaction a 5'-end NAD(+)-phospho-ribonucleoside in mRNA + H2O = a 5'-end phospho-adenosine-phospho-ribonucleoside in mRNA + beta-nicotinamide D-ribonucleotide + 2 H(+). It catalyses the reaction NAD(+) + H2O = beta-nicotinamide D-ribonucleotide + AMP + 2 H(+). The catalysed reaction is NADH + H2O = reduced beta-nicotinamide D-ribonucleotide + AMP + 2 H(+). Functionally, mRNA decapping enzyme that specifically removes the nicotinamide adenine dinucleotide (NAD) cap from a subset of mRNAs by hydrolyzing the diphosphate linkage to produce nicotinamide mononucleotide (NMN) and 5' monophosphate mRNA. The NAD-cap is present at the 5'-end of some mRNAs and stabilizes RNA against 5'-processing. Has preference for mRNAs with a 5'-end purine. Catalyzes the hydrolysis of a broad range of dinucleotide pyrophosphates. The chain is NAD-capped RNA hydrolase NudC from Pseudomonas syringae pv. tomato (strain ATCC BAA-871 / DC3000).